Here is a 226-residue protein sequence, read N- to C-terminus: Leucyl/phenylalanyl-tRNA--protein transferase (226 aa).

Belongs to the L/F-transferase family.

It is found in the cytoplasm. The catalysed reaction is N-terminal L-lysyl-[protein] + L-leucyl-tRNA(Leu) = N-terminal L-leucyl-L-lysyl-[protein] + tRNA(Leu) + H(+). It carries out the reaction N-terminal L-arginyl-[protein] + L-leucyl-tRNA(Leu) = N-terminal L-leucyl-L-arginyl-[protein] + tRNA(Leu) + H(+). It catalyses the reaction L-phenylalanyl-tRNA(Phe) + an N-terminal L-alpha-aminoacyl-[protein] = an N-terminal L-phenylalanyl-L-alpha-aminoacyl-[protein] + tRNA(Phe). Its function is as follows. Functions in the N-end rule pathway of protein degradation where it conjugates Leu, Phe and, less efficiently, Met from aminoacyl-tRNAs to the N-termini of proteins containing an N-terminal arginine or lysine. The chain is Leucyl/phenylalanyl-tRNA--protein transferase from Pseudomonas paraeruginosa (strain DSM 24068 / PA7) (Pseudomonas aeruginosa (strain PA7)).